Here is a 313-residue protein sequence, read N- to C-terminus: Ribosomal protein L11 methyltransferase (313 aa).

4 residues coordinate S-adenosyl-L-methionine: threonine 161, glycine 182, aspartate 204, and asparagine 247.

It belongs to the methyltransferase superfamily. PrmA family.

Its subcellular location is the cytoplasm. It catalyses the reaction L-lysyl-[protein] + 3 S-adenosyl-L-methionine = N(6),N(6),N(6)-trimethyl-L-lysyl-[protein] + 3 S-adenosyl-L-homocysteine + 3 H(+). Functionally, methylates ribosomal protein L11. This chain is Ribosomal protein L11 methyltransferase, found in Halalkalibacterium halodurans (strain ATCC BAA-125 / DSM 18197 / FERM 7344 / JCM 9153 / C-125) (Bacillus halodurans).